A 728-amino-acid polypeptide reads, in one-letter code: Polyribonucleotide nucleotidyltransferase (728 aa).

Mg(2+) contacts are provided by aspartate 509 and aspartate 515. In terms of domain architecture, KH spans 576 to 638 (TKIYTFYIPK…TKLKIAILKI (63 aa)). In terms of domain architecture, S1 motif spans 648 to 715 (GTIYKAKVKN…KFRKIKLSHK (68 aa)).

The protein belongs to the polyribonucleotide nucleotidyltransferase family. It depends on Mg(2+) as a cofactor.

It is found in the cytoplasm. The catalysed reaction is RNA(n+1) + phosphate = RNA(n) + a ribonucleoside 5'-diphosphate. Functionally, involved in mRNA degradation. Catalyzes the phosphorolysis of single-stranded polyribonucleotides processively in the 3'- to 5'-direction. This is Polyribonucleotide nucleotidyltransferase from Karelsulcia muelleri (strain GWSS) (Sulcia muelleri).